Consider the following 98-residue polypeptide: MGQPSWQGDTLHLTIRVQPKAAQERVMGWQGEQLKVALNAPPVDGAANKALCHFLAKQLGIAKGQVTLVRGEKSREKQLVIQGISPSIWQQFLERHGV.

Belongs to the UPF0235 family.

This is UPF0235 protein Mmc1_3654 from Magnetococcus marinus (strain ATCC BAA-1437 / JCM 17883 / MC-1).